The sequence spans 75 residues: Putative defensin-like protein 119 (75 aa).

The signal sequence occupies residues 1–25 (MAKSTIFAIFMIVFVLGMVTKETKG). 4 disulfides stabilise this stretch: cysteine 29-cysteine 73, cysteine 39-cysteine 58, cysteine 44-cysteine 67, and cysteine 48-cysteine 69.

This sequence belongs to the DEFL family.

The protein resides in the secreted. The protein is Putative defensin-like protein 119 (LCR53) of Arabidopsis thaliana (Mouse-ear cress).